We begin with the raw amino-acid sequence, 211 residues long: Large ribosomal subunit protein uL3 (211 aa).

Residue glutamine 150 is modified to N5-methylglutamine.

Belongs to the universal ribosomal protein uL3 family. In terms of assembly, part of the 50S ribosomal subunit. Forms a cluster with proteins L14 and L19. Methylated by PrmB.

Its function is as follows. One of the primary rRNA binding proteins, it binds directly near the 3'-end of the 23S rRNA, where it nucleates assembly of the 50S subunit. The sequence is that of Large ribosomal subunit protein uL3 from Pseudomonas fluorescens (strain ATCC BAA-477 / NRRL B-23932 / Pf-5).